The primary structure comprises 393 residues: Glycerol-3-phosphate dehydrogenase [NAD(+)] 1 (393 aa).

NAD(+) is bound by residues 45–50 (GSGNWG), F133, K157, and A190. Position 157 (K157) interacts with substrate. K250 (proton acceptor) is an active-site residue. NAD(+)-binding residues include R316 and Q345. Substrate is bound at residue 316–317 (RN).

It belongs to the NAD-dependent glycerol-3-phosphate dehydrogenase family.

It catalyses the reaction sn-glycerol 3-phosphate + NAD(+) = dihydroxyacetone phosphate + NADH + H(+). The chain is Glycerol-3-phosphate dehydrogenase [NAD(+)] 1 (gpd1) from Cyberlindnera jadinii (Torula yeast).